The sequence spans 259 residues: uncharacterized protein (259 aa).

Helical transmembrane passes span 55–75, 85–105, and 127–147; these read ILILVLFSGTFLLSSYFSYLI, FPSITISLSSLLPPLIIFFSS, and FFFAFAVFFAASIAFLDLCCG.

Its subcellular location is the membrane. This is an uncharacterized protein from Arabidopsis thaliana (Mouse-ear cress).